A 333-amino-acid polypeptide reads, in one-letter code: DNA-directed RNA polymerase subunit alpha (333 aa).

Residues 1–234 (MQISVNEFLT…QQLAAFVDLK (234 aa)) are alpha N-terminal domain (alpha-NTD). The tract at residues 248–333 (IDPILLRPVD…SLKKDDKATA (86 aa)) is alpha C-terminal domain (alpha-CTD).

This sequence belongs to the RNA polymerase alpha chain family. Homodimer. The RNAP catalytic core consists of 2 alpha, 1 beta, 1 beta' and 1 omega subunit. When a sigma factor is associated with the core the holoenzyme is formed, which can initiate transcription.

The catalysed reaction is RNA(n) + a ribonucleoside 5'-triphosphate = RNA(n+1) + diphosphate. Functionally, DNA-dependent RNA polymerase catalyzes the transcription of DNA into RNA using the four ribonucleoside triphosphates as substrates. In Pseudomonas fluorescens (strain ATCC BAA-477 / NRRL B-23932 / Pf-5), this protein is DNA-directed RNA polymerase subunit alpha.